A 71-amino-acid polypeptide reads, in one-letter code: Brevinin-1E (71 aa).

An N-terminal signal peptide occupies residues Met1–Cys22. The propeptide occupies Glu23–Glu45. The cysteines at positions 65 and 71 are disulfide-linked.

This sequence belongs to the frog skin active peptide (FSAP) family. Brevinin subfamily. Expressed by the skin glands.

The protein resides in the secreted. Its function is as follows. Shows antibacterial activity against representative Gram-negative and Gram-positive bacterial species, and a very high hemolytic activity. This Pelophylax lessonae (Pool frog) protein is Brevinin-1E.